The sequence spans 376 residues: Erythronate-4-phosphate dehydrogenase (376 aa).

Residues Ser-45 and Thr-67 each contribute to the substrate site. Asp-147 contacts NAD(+). Residue Arg-209 is part of the active site. Asp-233 contacts NAD(+). Residue Glu-238 is part of the active site. His-255 acts as the Proton donor in catalysis. Gly-258 provides a ligand contact to NAD(+). Residue Tyr-259 coordinates substrate.

Belongs to the D-isomer specific 2-hydroxyacid dehydrogenase family. PdxB subfamily. Homodimer.

It is found in the cytoplasm. The enzyme catalyses 4-phospho-D-erythronate + NAD(+) = (R)-3-hydroxy-2-oxo-4-phosphooxybutanoate + NADH + H(+). The protein operates within cofactor biosynthesis; pyridoxine 5'-phosphate biosynthesis; pyridoxine 5'-phosphate from D-erythrose 4-phosphate: step 2/5. In terms of biological role, catalyzes the oxidation of erythronate-4-phosphate to 3-hydroxy-2-oxo-4-phosphonooxybutanoate. The sequence is that of Erythronate-4-phosphate dehydrogenase from Shewanella baltica (strain OS195).